The chain runs to 304 residues: MTVPTYDKFIEPVLRYLATKPEGAAARDVHEAAADALGLDDSQRAKVITSGQLVYKNRAGWAHDRLKRAGLSQSLSRGKWCLTPAGFDWVASHPQPMTEQETNHLAFAFVNVKLKSRPDAVDLDPKADSPDHEELAKSSPDDRLDQALKELRDAVADEVLENLLQVSPSRFEVIVLDVLHRLGYGGHRDDLQRVGGTGDGGIDGVISLDKLGLEKVYVQAKRWQNTVGRPELQAFYGALAGQKAKRGVFITTSGFTSQARDFAQSVEGMVLVDGERLVHLMIENEVGVSSRLLKVPKLDMDYFE.

The interval 120-142 (AVDLDPKADSPDHEELAKSSPDD) is disordered.

In terms of biological role, involved in the acceptance of foreign DNA which is modified. Restricts both adenine- and cytosine-methylated DNA. This is Type IV methyl-directed restriction enzyme EcoKMrr (mrr) from Escherichia coli (strain K12).